Here is a 163-residue protein sequence, read N- to C-terminus: Large ribosomal subunit protein eL24y (163 aa).

Basic and acidic residues predominate over residues 119–133 (IKKTKDEKKAKKVEF). Positions 119 to 163 (IKKTKDEKKAKKVEFASKQQKVKANFPKAAAASKGPKVGGGGGKR) are disordered.

This sequence belongs to the eukaryotic ribosomal protein eL24 family. In terms of assembly, interacts with REIL1 and REIL2. Component of the large ribosomal subunit. Ubiquitous.

Its subcellular location is the cytoplasm. It localises to the nucleus. The protein localises to the nucleolus. It is found in the nucleoplasm. Its function is as follows. Might have an extraribosomal function in reinitiation of translation of ETTIN and MONOPTEROS genes that are involved in the auxin-mediated gynoecium patterning. Essential in leaf polarity establishment, probably having a role for translation in leaf dorsoventral patterning to specify leaf adaxial identity. This chain is Large ribosomal subunit protein eL24y, found in Arabidopsis thaliana (Mouse-ear cress).